The following is a 185-amino-acid chain: MPIQNSPYNAFATLLSSSGHPVSPAELHGLLLGRSCAGAGFEVDGWLVDAAELLEGEPQDNVRSALIGLQEMVKGELTSDDMTVVLLLPSDDAPLAERAAALGQWCQGFLAGFGLNSRDSSALSVEATEVLQDLAAIAQVQDALEESDDGESDYMEVMEYLRVAPLLLFTETNKTVAPAAKPSLH.

Belongs to the UPF0149 family.

In Pseudomonas fluorescens (strain ATCC BAA-477 / NRRL B-23932 / Pf-5), this protein is UPF0149 protein PFL_5969.